Here is a 48-residue protein sequence, read N- to C-terminus: Large ribosomal subunit protein bL34 (48 aa).

Belongs to the bacterial ribosomal protein bL34 family.

The polypeptide is Large ribosomal subunit protein bL34 (rpmH) (Mycoplasma pneumoniae (strain ATCC 29342 / M129 / Subtype 1) (Mycoplasmoides pneumoniae)).